The chain runs to 456 residues: tRNA modification GTPase MnmE (456 aa).

Residues K29, E87, and R126 each coordinate (6S)-5-formyl-5,6,7,8-tetrahydrofolate. The TrmE-type G domain maps to 222–380 (GYKLAIIGRP…LLSLLASWLD (159 aa)). N232 is a K(+) binding site. GTP is bound by residues 232 to 237 (NVGKSS), 251 to 257 (SDIPGTT), and 276 to 279 (DTAG). A Mg(2+)-binding site is contributed by S236. Residues S251, I253, and T256 each contribute to the K(+) site. T257 contacts Mg(2+). Residue K456 coordinates (6S)-5-formyl-5,6,7,8-tetrahydrofolate.

Belongs to the TRAFAC class TrmE-Era-EngA-EngB-Septin-like GTPase superfamily. TrmE GTPase family. As to quaternary structure, homodimer. Heterotetramer of two MnmE and two MnmG subunits. The cofactor is K(+).

The protein resides in the cytoplasm. Its function is as follows. Exhibits a very high intrinsic GTPase hydrolysis rate. Involved in the addition of a carboxymethylaminomethyl (cmnm) group at the wobble position (U34) of certain tRNAs, forming tRNA-cmnm(5)s(2)U34. This is tRNA modification GTPase MnmE from Wolinella succinogenes (strain ATCC 29543 / DSM 1740 / CCUG 13145 / JCM 31913 / LMG 7466 / NCTC 11488 / FDC 602W) (Vibrio succinogenes).